We begin with the raw amino-acid sequence, 65 residues long: Small ribosomal subunit protein bS21B (65 aa).

This sequence belongs to the bacterial ribosomal protein bS21 family.

The sequence is that of Small ribosomal subunit protein bS21B from Geobacter sulfurreducens (strain ATCC 51573 / DSM 12127 / PCA).